Consider the following 729-residue polypeptide: Glycine--tRNA ligase, mitochondrial 1 (729 aa).

Met-1 carries the post-translational modification N-acetylmethionine. Residues 1-28 (MRIFSTFVFHRRQQIFNLRQFQTTTILR) constitute a mitochondrion transit peptide. The 57-residue stretch at 50–106 (SLSEKSSSVEAQGNAVRALKASRAAKPEIDAAIEQLNKLKLEKSTVEKELQSIISSS) folds into the WHEP-TRS domain. Position 296 (Glu-296) interacts with glycine. Residues 328-330 (RNE) and 339-340 (RV) contribute to the ATP site. Glu-347 provides a ligand contact to glycine. ATP is bound at residue 454 to 455 (EC). 575-577 (EPS) is a binding site for glycine. Arg-582 contacts ATP.

This sequence belongs to the class-II aminoacyl-tRNA synthetase family. Homodimer.

It localises to the mitochondrion. The protein localises to the cytoplasm. Its subcellular location is the cytosol. It carries out the reaction tRNA(Gly) + glycine + ATP = glycyl-tRNA(Gly) + AMP + diphosphate. It catalyses the reaction 2 ATP + H(+) = P(1),P(4)-bis(5'-adenosyl) tetraphosphate + diphosphate. In terms of biological role, catalyzes the ATP-dependent ligation of glycine to the 3'-end of its cognate tRNA, via the formation of an aminoacyl-adenylate intermediate (Gly-AMP). Also produces diadenosine tetraphosphate (Ap4A), a universal pleiotropic signaling molecule needed for cell regulation pathways, by direct condensation of 2 ATPs. Thereby, may play a special role in Ap4A homeostasis. This Arabidopsis thaliana (Mouse-ear cress) protein is Glycine--tRNA ligase, mitochondrial 1.